The following is a 320-amino-acid chain: N-acetylneuraminate lyase (320 aa).

Aceneuramate is bound by residues Thr51 and Thr52. Tyr143 serves as the catalytic Proton donor. The active-site Schiff-base intermediate with substrate is Lys173. Aceneuramate is bound by residues Thr175, Gly199, Asp201, Glu202, and Ser218. Position 308 is a phosphoserine (Ser308).

This sequence belongs to the DapA family. NanA subfamily. As to quaternary structure, homotetramer.

It is found in the cytoplasm. It carries out the reaction aceneuramate = aldehydo-N-acetyl-D-mannosamine + pyruvate. It participates in amino-sugar metabolism; N-acetylneuraminate degradation. Functionally, catalyzes the cleavage of N-acetylneuraminic acid (sialic acid) to form pyruvate and N-acetylmannosamine via a Schiff base intermediate. It prevents sialic acids from being recycled and returning to the cell surface. Involved in the N-glycolylneuraminic acid (Neu5Gc) degradation pathway. The sequence is that of N-acetylneuraminate lyase from Mus musculus (Mouse).